The primary structure comprises 217 residues: MOB kinase activator 3A (217 aa).

Zn(2+)-binding residues include cysteine 83, cysteine 88, histidine 165, and histidine 170.

The protein belongs to the MOB1/phocein family.

May regulate the activity of kinases. The protein is MOB kinase activator 3A (MOB3A) of Homo sapiens (Human).